We begin with the raw amino-acid sequence, 227 residues long: Cytochrome c oxidase subunit 2 (227 aa).

Residues 1 to 14 (MAYPFQLGLQDATS) lie on the Mitochondrial intermembrane side of the membrane. The chain crosses the membrane as a helical span at residues 15–45 (PIMEELTNFHDHTLMIVFLISSLVLYIISLM). At 46–59 (LTTKLTHTSTMDAQ) the chain is on the mitochondrial matrix side. A helical transmembrane segment spans residues 60–87 (EVETIWTILPAVILILIALPSLRILYMM). At 88–227 (DEINNPVLTV…YFENWSASMI (140 aa)) the chain is on the mitochondrial intermembrane side. H161, C196, E198, C200, H204, and M207 together coordinate Cu cation. A Mg(2+)-binding site is contributed by E198. Y218 carries the phosphotyrosine modification.

This sequence belongs to the cytochrome c oxidase subunit 2 family. In terms of assembly, component of the cytochrome c oxidase (complex IV, CIV), a multisubunit enzyme composed of 14 subunits. The complex is composed of a catalytic core of 3 subunits MT-CO1, MT-CO2 and MT-CO3, encoded in the mitochondrial DNA, and 11 supernumerary subunits COX4I, COX5A, COX5B, COX6A, COX6B, COX6C, COX7A, COX7B, COX7C, COX8 and NDUFA4, which are encoded in the nuclear genome. The complex exists as a monomer or a dimer and forms supercomplexes (SCs) in the inner mitochondrial membrane with NADH-ubiquinone oxidoreductase (complex I, CI) and ubiquinol-cytochrome c oxidoreductase (cytochrome b-c1 complex, complex III, CIII), resulting in different assemblies (supercomplex SCI(1)III(2)IV(1) and megacomplex MCI(2)III(2)IV(2)). Found in a complex with TMEM177, COA6, COX18, COX20, SCO1 and SCO2. Interacts with TMEM177 in a COX20-dependent manner. Interacts with COX20. Interacts with COX16. Cu cation is required as a cofactor.

It localises to the mitochondrion inner membrane. It carries out the reaction 4 Fe(II)-[cytochrome c] + O2 + 8 H(+)(in) = 4 Fe(III)-[cytochrome c] + 2 H2O + 4 H(+)(out). Its function is as follows. Component of the cytochrome c oxidase, the last enzyme in the mitochondrial electron transport chain which drives oxidative phosphorylation. The respiratory chain contains 3 multisubunit complexes succinate dehydrogenase (complex II, CII), ubiquinol-cytochrome c oxidoreductase (cytochrome b-c1 complex, complex III, CIII) and cytochrome c oxidase (complex IV, CIV), that cooperate to transfer electrons derived from NADH and succinate to molecular oxygen, creating an electrochemical gradient over the inner membrane that drives transmembrane transport and the ATP synthase. Cytochrome c oxidase is the component of the respiratory chain that catalyzes the reduction of oxygen to water. Electrons originating from reduced cytochrome c in the intermembrane space (IMS) are transferred via the dinuclear copper A center (CU(A)) of subunit 2 and heme A of subunit 1 to the active site in subunit 1, a binuclear center (BNC) formed by heme A3 and copper B (CU(B)). The BNC reduces molecular oxygen to 2 water molecules using 4 electrons from cytochrome c in the IMS and 4 protons from the mitochondrial matrix. The sequence is that of Cytochrome c oxidase subunit 2 from Rattus norvegicus (Rat).